Here is a 98-residue protein sequence, read N- to C-terminus: uncharacterized protein (98 aa).

This is an uncharacterized protein from Ureaplasma parvum serovar 3 (strain ATCC 700970).